The primary structure comprises 73 residues: Small ribosomal subunit protein bS18 (73 aa).

The protein belongs to the bacterial ribosomal protein bS18 family. In terms of assembly, part of the 30S ribosomal subunit. Forms a tight heterodimer with protein bS6.

Functionally, binds as a heterodimer with protein bS6 to the central domain of the 16S rRNA, where it helps stabilize the platform of the 30S subunit. This is Small ribosomal subunit protein bS18 from Synechococcus sp. (strain RCC307).